Reading from the N-terminus, the 254-residue chain is 4-hydroxy-tetrahydrodipicolinate reductase (254 aa).

NAD(+)-binding positions include 8–13 (GGSGRV), 87–89 (GTT), and 111–114 (ATNM). The active-site Proton donor/acceptor is histidine 143. Histidine 144 is a (S)-2,3,4,5-tetrahydrodipicolinate binding site. The active-site Proton donor is lysine 147. 153-154 (GT) contacts (S)-2,3,4,5-tetrahydrodipicolinate.

The protein belongs to the DapB family.

The protein localises to the cytoplasm. It carries out the reaction (S)-2,3,4,5-tetrahydrodipicolinate + NAD(+) + H2O = (2S,4S)-4-hydroxy-2,3,4,5-tetrahydrodipicolinate + NADH + H(+). The enzyme catalyses (S)-2,3,4,5-tetrahydrodipicolinate + NADP(+) + H2O = (2S,4S)-4-hydroxy-2,3,4,5-tetrahydrodipicolinate + NADPH + H(+). The protein operates within amino-acid biosynthesis; L-lysine biosynthesis via DAP pathway; (S)-tetrahydrodipicolinate from L-aspartate: step 4/4. Catalyzes the conversion of 4-hydroxy-tetrahydrodipicolinate (HTPA) to tetrahydrodipicolinate. The sequence is that of 4-hydroxy-tetrahydrodipicolinate reductase from Nitratiruptor sp. (strain SB155-2).